A 490-amino-acid chain; its full sequence is Phosphoglucosamine mutase (490 aa).

The active-site Phosphoserine intermediate is the Ser139. Positions 139, 279, 281, and 283 each coordinate Mg(2+). Ser139 is modified (phosphoserine).

The protein belongs to the phosphohexose mutase family. Mg(2+) serves as cofactor. In terms of processing, activated by phosphorylation.

It catalyses the reaction alpha-D-glucosamine 1-phosphate = D-glucosamine 6-phosphate. In terms of biological role, catalyzes the conversion of glucosamine-6-phosphate to glucosamine-1-phosphate. This Nostoc punctiforme (strain ATCC 29133 / PCC 73102) protein is Phosphoglucosamine mutase.